The following is a 78-amino-acid chain: U7-lycotoxin-Ls1f (78 aa).

The N-terminal stretch at 1-22 is a signal peptide; it reads MKLIIFTGLALLLIVSLIDVEA. A propeptide spanning residues 23–26 is cleaved from the precursor; sequence QNEG.

This sequence belongs to the neurotoxin 19 (CSTX) family. 07 (U7-Lctx) subfamily. Post-translationally, contains 4 disulfide bonds. Expressed by the venom gland.

Its subcellular location is the secreted. The sequence is that of U7-lycotoxin-Ls1f from Lycosa singoriensis (Wolf spider).